Here is a 340-residue protein sequence, read N- to C-terminus: Phosphatidylglycerol--prolipoprotein diacylglyceryl transferase (340 aa).

The next 4 helical transmembrane spans lie at isoleucine 19–glycine 39, alanine 54–isoleucine 74, isoleucine 93–isoleucine 113, and glycine 119–phenylalanine 139. Residue arginine 141 coordinates a 1,2-diacyl-sn-glycero-3-phospho-(1'-sn-glycerol). Transmembrane regions (helical) follow at residues histidine 176 to alanine 196, leucine 202 to tryptophan 221, and leucine 238 to serine 258. Residues glutamate 266 to valine 340 form a disordered region. Over residues aspartate 284 to threonine 294 the composition is skewed to basic and acidic residues. The segment covering aspartate 295–aspartate 307 has biased composition (low complexity). Residues proline 326–valine 340 show a composition bias toward basic and acidic residues.

Belongs to the Lgt family.

The protein resides in the cell membrane. The catalysed reaction is L-cysteinyl-[prolipoprotein] + a 1,2-diacyl-sn-glycero-3-phospho-(1'-sn-glycerol) = an S-1,2-diacyl-sn-glyceryl-L-cysteinyl-[prolipoprotein] + sn-glycerol 1-phosphate + H(+). It functions in the pathway protein modification; lipoprotein biosynthesis (diacylglyceryl transfer). In terms of biological role, catalyzes the transfer of the diacylglyceryl group from phosphatidylglycerol to the sulfhydryl group of the N-terminal cysteine of a prolipoprotein, the first step in the formation of mature lipoproteins. This chain is Phosphatidylglycerol--prolipoprotein diacylglyceryl transferase, found in Streptomyces avermitilis (strain ATCC 31267 / DSM 46492 / JCM 5070 / NBRC 14893 / NCIMB 12804 / NRRL 8165 / MA-4680).